We begin with the raw amino-acid sequence, 226 residues long: 8-oxoguanine DNA glycosylase/AP lyase (226 aa).

Residues Lys-149 and Asp-167 contribute to the active site.

This sequence belongs to the type-2 OGG1 family.

The catalysed reaction is 2'-deoxyribonucleotide-(2'-deoxyribose 5'-phosphate)-2'-deoxyribonucleotide-DNA = a 3'-end 2'-deoxyribonucleotide-(2,3-dehydro-2,3-deoxyribose 5'-phosphate)-DNA + a 5'-end 5'-phospho-2'-deoxyribonucleoside-DNA + H(+). Its function is as follows. Catalyzes the excision of an oxidatively damaged form of guanine (7,8-dihydro-8-oxoguanine = 8-oxoG) from DNA. Also cleaves the DNA backbone at apurinic/apyrimidinic sites (AP sites). This Aquifex aeolicus (strain VF5) protein is 8-oxoguanine DNA glycosylase/AP lyase.